The following is a 112-amino-acid chain: MTGKTVTRADLAESVFRKVGLSRTESAELVETVIDEICNAIVRGETVKLSSFATFQVRDKNERIGRNPKTGEEVPISPRRVMTFKASNVLKTRILKAHVSRKVKLKPQNPAP.

Belongs to the bacterial histone-like protein family. As to quaternary structure, heterodimer of an alpha and a beta chain.

In terms of biological role, this protein is one of the two subunits of integration host factor, a specific DNA-binding protein that functions in genetic recombination as well as in transcriptional and translational control. The polypeptide is Integration host factor subunit alpha (Rhizobium etli (strain CIAT 652)).